The following is a 227-amino-acid chain: Cytochrome c oxidase subunit 2 (227 aa).

The Mitochondrial intermembrane portion of the chain corresponds to Met1–Ser14. A helical membrane pass occupies residues Pro15–Thr45. Topologically, residues Leu46 to Gln59 are mitochondrial matrix. A helical membrane pass occupies residues Glu60 to Thr87. At Asp88 to Leu227 the chain is on the mitochondrial intermembrane side. Cu cation contacts are provided by His161, Cys196, Glu198, Cys200, His204, and Met207. Position 198 (Glu198) interacts with Mg(2+).

The protein belongs to the cytochrome c oxidase subunit 2 family. As to quaternary structure, component of the cytochrome c oxidase (complex IV, CIV), a multisubunit enzyme composed of 14 subunits. The complex is composed of a catalytic core of 3 subunits MT-CO1, MT-CO2 and MT-CO3, encoded in the mitochondrial DNA, and 11 supernumerary subunits COX4I, COX5A, COX5B, COX6A, COX6B, COX6C, COX7A, COX7B, COX7C, COX8 and NDUFA4, which are encoded in the nuclear genome. The complex exists as a monomer or a dimer and forms supercomplexes (SCs) in the inner mitochondrial membrane with NADH-ubiquinone oxidoreductase (complex I, CI) and ubiquinol-cytochrome c oxidoreductase (cytochrome b-c1 complex, complex III, CIII), resulting in different assemblies (supercomplex SCI(1)III(2)IV(1) and megacomplex MCI(2)III(2)IV(2)). Found in a complex with TMEM177, COA6, COX18, COX20, SCO1 and SCO2. Interacts with TMEM177 in a COX20-dependent manner. Interacts with COX20. Interacts with COX16. It depends on Cu cation as a cofactor.

It is found in the mitochondrion inner membrane. The catalysed reaction is 4 Fe(II)-[cytochrome c] + O2 + 8 H(+)(in) = 4 Fe(III)-[cytochrome c] + 2 H2O + 4 H(+)(out). Functionally, component of the cytochrome c oxidase, the last enzyme in the mitochondrial electron transport chain which drives oxidative phosphorylation. The respiratory chain contains 3 multisubunit complexes succinate dehydrogenase (complex II, CII), ubiquinol-cytochrome c oxidoreductase (cytochrome b-c1 complex, complex III, CIII) and cytochrome c oxidase (complex IV, CIV), that cooperate to transfer electrons derived from NADH and succinate to molecular oxygen, creating an electrochemical gradient over the inner membrane that drives transmembrane transport and the ATP synthase. Cytochrome c oxidase is the component of the respiratory chain that catalyzes the reduction of oxygen to water. Electrons originating from reduced cytochrome c in the intermembrane space (IMS) are transferred via the dinuclear copper A center (CU(A)) of subunit 2 and heme A of subunit 1 to the active site in subunit 1, a binuclear center (BNC) formed by heme A3 and copper B (CU(B)). The BNC reduces molecular oxygen to 2 water molecules using 4 electrons from cytochrome c in the IMS and 4 protons from the mitochondrial matrix. In Pan troglodytes (Chimpanzee), this protein is Cytochrome c oxidase subunit 2 (MT-CO2).